Here is a 576-residue protein sequence, read N- to C-terminus: Zinc finger protein 791 (576 aa).

Residues valine 4–valine 90 enclose the KRAB domain. C2H2-type zinc fingers lie at residues tyrosine 100–histidine 122, tyrosine 132–histidine 154, tyrosine 160–histidine 182, tyrosine 188–histidine 210, tyrosine 216–histidine 238, tyrosine 244–histidine 266, tyrosine 272–histidine 294, tyrosine 300–histidine 322, tyrosine 328–histidine 350, tyrosine 356–histidine 378, tyrosine 384–histidine 406, tyrosine 412–histidine 434, tyrosine 440–histidine 462, tyrosine 468–histidine 490, tyrosine 496–histidine 518, tyrosine 524–histidine 546, and leucine 552–histidine 574.

It belongs to the krueppel C2H2-type zinc-finger protein family.

It localises to the nucleus. In terms of biological role, may be involved in transcriptional regulation. The polypeptide is Zinc finger protein 791 (ZNF791) (Homo sapiens (Human)).